The following is a 400-amino-acid chain: Elongation factor Tu (400 aa).

A tr-type G domain is found at 10–210 (KPHINVGTIG…ALDEYIPEPK (201 aa)). The interval 19–26 (GHVDHGKT) is G1. Residue 19–26 (GHVDHGKT) coordinates GTP. Threonine 26 contributes to the Mg(2+) binding site. Residues 64–68 (GITIA) form a G2 region. A G3 region spans residues 85 to 88 (DCPG). Residues 85 to 89 (DCPGH) and 140 to 143 (NKAD) contribute to the GTP site. Residues 140 to 143 (NKAD) form a G4 region. Residues 178–180 (SAL) form a G5 region.

It belongs to the TRAFAC class translation factor GTPase superfamily. Classic translation factor GTPase family. EF-Tu/EF-1A subfamily. In terms of assembly, monomer.

The protein localises to the cytoplasm. The enzyme catalyses GTP + H2O = GDP + phosphate + H(+). Its function is as follows. GTP hydrolase that promotes the GTP-dependent binding of aminoacyl-tRNA to the A-site of ribosomes during protein biosynthesis. This chain is Elongation factor Tu, found in Rubrobacter xylanophilus (strain DSM 9941 / JCM 11954 / NBRC 16129 / PRD-1).